The chain runs to 257 residues: TLC domain-containing protein 3A (257 aa).

7 helical membrane passes run Met1–Trp21, Leu42–Cys62, Val77–Cys97, Phe113–Ala135, Leu142–Leu162, Gly181–Trp201, and Phe220–Leu240. In terms of domain architecture, TLC spans Thr33–Asp249.

Interacts with GGT7 isoform 3 and SLC3A2. Highly expressed in pancreas. Detected at intermediate levels in heart, placenta and kidney, and at low levels in brain, liver and skeletal muscle. Not detected in normal lung.

Its subcellular location is the cell membrane. This chain is TLC domain-containing protein 3A, found in Homo sapiens (Human).